Here is a 76-residue protein sequence, read N- to C-terminus: MAKIIRIKGEILGKDEPMVFTKEYNVVKEDDALETMYSEMGSKHSVKRAYINVLEVSEISEEDVQSPILKKTLEMY.

It belongs to the eukaryotic ribosomal protein eL20 family. Part of the 50S ribosomal subunit. Binds 23S rRNA.

The polypeptide is Large ribosomal subunit protein eL20 (Methanococcus maripaludis (strain C6 / ATCC BAA-1332)).